A 633-amino-acid chain; its full sequence is DNA repair protein XRCC1 (633 aa).

Ser140 is modified (phosphoserine). A Glycyl lysine isopeptide (Lys-Gly) (interchain with G-Cter in SUMO1); alternate cross-link involves residue Lys176. Residue Lys176 forms a Glycyl lysine isopeptide (Lys-Gly) (interchain with G-Cter in SUMO2); alternate linkage. Thr198 carries the phosphothreonine modification. At Ser199 the chain carries Phosphoserine. Thr202 carries the phosphothreonine modification. A phosphoserine mark is found at Ser204, Ser226, and Ser241. The span at 221–231 (AASSASPVSRA) shows a compositional bias: low complexity. The disordered stretch occupies residues 221–313 (AASSASPVSR…TEPRRPRAGP (93 aa)). A compositionally biased stretch (basic and acidic residues) spans 240–257 (ESPKGKRKLDLNQEEKKT). Position 257 is a phosphothreonine (Thr257). A phosphoserine mark is found at Ser259 and Ser266. The segment covering 277-291 (APTRTPATAPVPARA) has biased composition (low complexity). Phosphothreonine is present on Thr281. The span at 299-313 (PRGEGTEPRRPRAGP) shows a compositional bias: basic and acidic residues. The BRCT 1 domain occupies 315–403 (ELGKILQGVV…RRLPSQRYLM (89 aa)). Position 371 is a phosphoserine; by PRKDC (Ser371). 3 disordered regions span residues 400–462 (RYLM…AASP), 471–490 (EGVQ…DTED), and 498–536 (QKEH…DLPV). Ser408, Ser409, Ser410, and Ser421 each carry phosphoserine. Positions 427-443 (KLPQKQPQTKTKPTQAA) are enriched in low complexity. A phosphoserine mark is found at Ser446 and Ser447. A phosphothreonine mark is found at Thr453 and Thr457. Residues Ser461 and Ser485 each carry the phosphoserine modification. Over residues 481–490 (GAEDSGDTED) the composition is skewed to acidic residues. Thr488 is modified (phosphothreonine). Residue Ser518 is modified to Phosphoserine. 2 positions are modified to phosphothreonine: Thr519 and Thr523. Residues 538-629 (ELPDFFQGKH…KLLPHQLYGV (92 aa)) enclose the BRCT 2 domain.

In terms of assembly, homodimer. Interacts with polynucleotide kinase (PNK), DNA polymerase-beta (POLB) and DNA ligase III (LIG3). Interacts with APTX and APLF. Interacts with APEX1; the interaction is induced by SIRT1 and increases with the acetylated form of APEX1. Interacts with (poly-ADP-ribosylated) PARP1. Phosphorylation of Ser-371 causes dimer dissociation. Phosphorylation by CK2 promotes interaction with APTX and APLF. In terms of processing, sumoylated. In terms of tissue distribution, expressed in fibroblasts, retinal pigmented epithelial cells and lymphoblastoid cells (at protein level).

The protein resides in the nucleus. The protein localises to the chromosome. Its function is as follows. Scaffold protein involved in DNA single-strand break repair by mediating the assembly of DNA break repair protein complexes. Negatively regulates ADP-ribosyltransferase activity of PARP1 during base-excision repair in order to prevent excessive PARP1 activity. Recognizes and binds poly-ADP-ribose chains: specifically binds auto-poly-ADP-ribosylated PARP1, limiting its activity. This is DNA repair protein XRCC1 from Homo sapiens (Human).